A 732-amino-acid polypeptide reads, in one-letter code: Prolyl 3-hydroxylase 3 (732 aa).

A signal peptide spans 1–19 (MLRLLRLLLLLLLPPPGSP). Residues 15 to 25 (PPGSPEPPEPP) are compositionally biased toward pro residues. Positions 15-35 (PPGSPEPPEPPGLAQLSPGSP) are disordered. TPR repeat units lie at residues 39-72 (PDLLYADGLRAYSAGAWAPAVALLREALRSRAAL), 152-185 (REPYNYLQRAYYQLKKLDLAASAAHTFFVANPTH), 214-247 (YWAAYDTGLELLEQREAALALPQLEEALQGSLAH), and 312-345 (LSQLRRLHEAYAQVGNMSQAMENVLSVLLFYPED). Asparagine 327 and asparagine 458 each carry an N-linked (GlcNAc...) asparagine glycan. Positions 557–671 (THLVCRSAIE…RCALALWHTW (115 aa)) constitute a Fe2OG dioxygenase domain. Positions 580, 582, and 652 each coordinate Fe cation. Arginine 662 is a catalytic residue. Residues 674-703 (EHSEQEWTEAKELLQEEEEEEEEEDILSRD) adopt a coiled-coil conformation. Residues 676–687 (SEQEWTEAKELL) are compositionally biased toward basic and acidic residues. The interval 676–732 (SEQEWTEAKELLQEEEEEEEEEDILSRDPSPEPPSHKLQRVQEKAGKPRRVRVREEL) is disordered. The span at 688–698 (QEEEEEEEEED) shows a compositional bias: acidic residues. Residues 722 to 732 (KPRRVRVREEL) are compositionally biased toward basic residues. A Prevents secretion from ER motif is present at residues 729 to 732 (REEL).

This sequence belongs to the leprecan family. As to quaternary structure, identified in a complex with PLOD1 and P3H4. Requires Fe cation as cofactor. L-ascorbate serves as cofactor. As to expression, detected in kidney (at protein level).

It is found in the endoplasmic reticulum. The enzyme catalyses L-prolyl-[collagen] + 2-oxoglutarate + O2 = trans-3-hydroxy-L-prolyl-[collagen] + succinate + CO2. Part of a complex composed of PLOD1, P3H3 and P3H4 that catalyzes hydroxylation of lysine residues in collagen alpha chains and is required for normal assembly and cross-linkling of collagen fibrils. Required for normal hydroxylation of lysine residues in type I collagen chains in skin, bone, tendon, aorta and cornea. Required for normal skin stability via its role in hydroxylation of lysine residues in collagen alpha chains and in collagen fibril assembly. Apparently not required for normal prolyl 3-hydroxylation on collagen chains, possibly because it functions redundantly with other prolyl 3-hydroxylases. This is Prolyl 3-hydroxylase 3 from Mus musculus (Mouse).